The primary structure comprises 761 residues: Translation initiation factor IF-2 (761 aa).

Residues 39-179 (DEETLNKAKQ…KVNHQQMPLP (141 aa)) form a disordered region. Low complexity predominate over residues 45–105 (KAKQAGKPAA…NNQQSQSQGQ (61 aa)). A compositionally biased stretch (polar residues) spans 106–120 (TKRPSQASNNQSGAA). Residues 142–154 (PGSNNRRPGNNQN) are compositionally biased toward low complexity. A compositionally biased stretch (basic residues) spans 155-168 (RRNHGNRGGKRRPQ). The tr-type G domain occupies 262–435 (ERPPVVTIMG…EVEEFKANPD (174 aa)). The interval 271-278 (GHVDHGKT) is G1. GTP is bound at residue 271–278 (GHVDHGKT). The G2 stretch occupies residues 296-300 (GITQH). The interval 317–320 (DTPG) is G3. Residues 317 to 321 (DTPGH) and 371 to 374 (NKID) each bind GTP. A G4 region spans residues 371-374 (NKID). Residues 407 to 409 (SAL) are G5.

The protein belongs to the TRAFAC class translation factor GTPase superfamily. Classic translation factor GTPase family. IF-2 subfamily.

Its subcellular location is the cytoplasm. One of the essential components for the initiation of protein synthesis. Protects formylmethionyl-tRNA from spontaneous hydrolysis and promotes its binding to the 30S ribosomal subunits. Also involved in the hydrolysis of GTP during the formation of the 70S ribosomal complex. In Shouchella clausii (strain KSM-K16) (Alkalihalobacillus clausii), this protein is Translation initiation factor IF-2.